Consider the following 266-residue polypeptide: MGTLTASLVAPSKLNPEKHSSLFVYKTRRKSHKNQSIVPVARLFGPAIFEASKLKVLFLGVDEKKHPGKLPRTYTLTHSDITSKLTLAISQTINNSQLQGWYNRLQRDEVVAEWKKVKGKMSLHVHCHISGGHFMLDLFARLRYYIFCKELPVVLKAFVHGDENLLKNYPELQQALVWVYFHSNIQEFNKVECWGPLKDAASPSSSGVGGGMNTSFTSNSNIKWILPKPCEETCTCCFPPMSVIPWPSTTNVENGTIQQGLQEQQS.

The transit peptide at 1 to 50 (MGTLTASLVAPSKLNPEKHSSLFVYKTRRKSHKNQSIVPVARLFGPAIFE) directs the protein to the chloroplast.

It belongs to the staygreen family.

It localises to the plastid. Its subcellular location is the chloroplast. Its function is as follows. Required to trigger chlorophyll degradation during leaf senescence and fruit ripening. This Capsicum annuum (Capsicum pepper) protein is Protein STAY-GREEN homolog, chloroplastic.